A 116-amino-acid chain; its full sequence is Cation channel sperm-associated auxiliary subunit TMEM262 (116 aa).

Residues 1 to 16 (MRWRDRIAVLCFPPGL) are Cytoplasmic-facing. A helical transmembrane segment spans residues 17-38 (MLTVAALILFFIHMGVFASDVH). Topologically, residues 39–51 (NFCVIHNYDHMSF) are extracellular. A helical transmembrane segment spans residues 52–72 (RYTVVLIFSQVISIGWAAMGS). The Cytoplasmic portion of the chain corresponds to 73-84 (LYAEMTGDKFLR). The helical transmembrane segment at 85 to 107 (CFALTILILNGAMFFNRLCLEFL) threads the bilayer. Residues 108-116 (AINYREERH) are Extracellular-facing.

As to quaternary structure, component of the CatSper complex or CatSpermasome composed of the core pore-forming members CATSPER1, CATSPER2, CATSPER3 and CATSPER4 as well as auxiliary members CATSPERB, CATSPERG, CATSPERD, CATSPERE, CATSPERZ, C2CD6/CATSPERT, SLCO6C1, TMEM249, TMEM262 and EFCAB9. HSPA1 may be an additional auxiliary complex member. The core complex members CATSPER1, CATSPER2, CATSPER3 and CATSPER4 form a heterotetrameric channel. The auxiliary CATSPERB, CATSPERG2, CATSPERD and CATSPERE subunits form a pavilion-like structure over the pore which stabilizes the complex through interactions with CATSPER4, CATSPER3, CATSPER1 and CATSPER2 respectively. SLCO6C1 interacts with CATSPERE and TMEM262/CATSPERH interacts with CATSPERB, further stabilizing the complex. C2CD6/CATSPERT interacts at least with CATSPERD and is required for targeting the CatSper complex in the flagellar membrane.

It is found in the cell projection. The protein localises to the cilium. Its subcellular location is the flagellum membrane. Functionally, auxiliary component of the CatSper complex, a complex involved in sperm cell hyperactivation. In Mus musculus (Mouse), this protein is Cation channel sperm-associated auxiliary subunit TMEM262.